A 227-amino-acid chain; its full sequence is ATP synthase subunit a (227 aa).

6 consecutive transmembrane segments (helical) span residues 14–34 (LLNI…FVSF), 69–89 (WVVL…IGLF), 98–118 (QLSM…VYGF), 137–157 (LLVP…PLAL), 169–189 (HLLM…SVML), and 205–223 (IAVA…TLYL).

This sequence belongs to the ATPase A chain family. In terms of assembly, F-type ATPases have 2 components, CF(1) - the catalytic core - and CF(0) - the membrane proton channel. CF(1) has five subunits: alpha(3), beta(3), gamma(1), delta(1), epsilon(1). CF(0) has three main subunits: a, b and c.

The protein resides in the mitochondrion inner membrane. Mitochondrial membrane ATP synthase (F(1)F(0) ATP synthase or Complex V) produces ATP from ADP in the presence of a proton gradient across the membrane which is generated by electron transport complexes of the respiratory chain. F-type ATPases consist of two structural domains, F(1) - containing the extramembraneous catalytic core and F(0) - containing the membrane proton channel, linked together by a central stalk and a peripheral stalk. During catalysis, ATP synthesis in the catalytic domain of F(1) is coupled via a rotary mechanism of the central stalk subunits to proton translocation. Key component of the proton channel; it may play a direct role in the translocation of protons across the membrane. The protein is ATP synthase subunit a (ATP6) of Branchiostoma floridae (Florida lancelet).